Reading from the N-terminus, the 560-residue chain is DNA ligase B (560 aa).

Catalysis depends on lysine 124, which acts as the N6-AMP-lysine intermediate.

It belongs to the NAD-dependent DNA ligase family. LigB subfamily.

The enzyme catalyses NAD(+) + (deoxyribonucleotide)n-3'-hydroxyl + 5'-phospho-(deoxyribonucleotide)m = (deoxyribonucleotide)n+m + AMP + beta-nicotinamide D-nucleotide.. Catalyzes the formation of phosphodiester linkages between 5'-phosphoryl and 3'-hydroxyl groups in double-stranded DNA using NAD as a coenzyme and as the energy source for the reaction. The protein is DNA ligase B of Escherichia coli O17:K52:H18 (strain UMN026 / ExPEC).